The primary structure comprises 88 residues: Large ribosomal subunit protein bL27 (88 aa).

The disordered stretch occupies residues 1–22; it reads MAQKKAGGSSRNGRDSAGRRLG.

This sequence belongs to the bacterial ribosomal protein bL27 family.

The polypeptide is Large ribosomal subunit protein bL27 (Gluconobacter oxydans (strain 621H) (Gluconobacter suboxydans)).